The primary structure comprises 256 residues: Major prion protein (256 aa).

A signal peptide spans 1–24 (MVKSHIGSWILVLFVAMWSDVGLC). An interaction with GRB2, ERI3 and SYN1 region spans residues 25–233 (KKRPKPGGGW…ESEAYYQRGA (209 aa)). Residues 28 to 110 (PKPGGGWNTG…QWNKPSKPKT (83 aa)) form a disordered region. Repeat copies occupy residues 54–62 (PQGGGGWGQ), 63–70 (PHGGGWGQ), 71–78 (PHGGGWGQ), 79–86 (PHGGGWGQ), and 87–95 (PHGGGGWGQ). Residues 54-95 (PQGGGGWGQPHGGGWGQPHGGGWGQPHGGGWGQPHGGGGWGQ) form a 5 X 8 AA tandem repeats of P-H-G-G-G-W-G-Q region. Residues 55 to 97 (QGGGGWGQPHGGGWGQPHGGGWGQPHGGGWGQPHGGGGWGQGG) show a composition bias toward gly residues. Residues H64, G65, G66, H72, G73, G74, H80, G81, G82, H88, G90, and G91 each contribute to the Cu(2+) site. An intrachain disulfide couples C182 to C217. Residues N184 and N200 are each glycosylated (N-linked (GlcNAc...) asparagine). A233 is lipidated: GPI-anchor amidated alanine. Positions 234–256 (SVILFSSPPVILLISFLIFLIVG) are cleaved as a propeptide — removed in mature form.

Belongs to the prion family. In terms of assembly, monomer and homodimer. Has a tendency to aggregate into amyloid fibrils containing a cross-beta spine, formed by a steric zipper of superposed beta-strands. Soluble oligomers may represent an intermediate stage on the path to fibril formation. Copper binding may promote oligomerization. Interacts with GRB2, APP, ERI3/PRNPIP and SYN1. Mislocalized cytosolically exposed PrP interacts with MGRN1; this interaction alters MGRN1 subcellular location and causes lysosomal enlargement. Interacts with KIAA1191.

The protein localises to the cell membrane. It is found in the golgi apparatus. Its function is as follows. Its primary physiological function is unclear. Has cytoprotective activity against internal or environmental stresses. May play a role in neuronal development and synaptic plasticity. May be required for neuronal myelin sheath maintenance. May play a role in iron uptake and iron homeostasis. Soluble oligomers are toxic to cultured neuroblastoma cells and induce apoptosis (in vitro). Association with GPC1 (via its heparan sulfate chains) targets PRNP to lipid rafts. Also provides Cu(2+) or Zn(2+) for the ascorbate-mediated GPC1 deaminase degradation of its heparan sulfate side chains. This is Major prion protein (PRNP) from Cervus elaphus (Red deer).